Consider the following 435-residue polypeptide: MKSTPKLLLLLLFIINHHVDSGSIVKFLPGFEGPLPFELETGYIGIGEEEDVQLFYYFIKSERNPKEDPLLLWLSGGPGCSSITGLLFENGPLALKSKVYNGSVPSLVSTTYSWTKTANIIFLDQPIGAGFSYSRIPLIDTPSDTGEVKNIHEFLQKWLSKHPQFSSNPFYASGDSYSGMIVPALVQEISKGNYICCKPPINLQGYILGNPITYFEVDQNYRIPFSHGMALISDELYESIRRDCKGNYFNVDPRNTKCLKLVEEYHKCTDELNEFNILSPDCDTTSPDCFLYPYYLLGYWINDESVRDALHVNKSSIGKWERCTYQNRIPYNKDINNSIPYHMNNSISGYRSLIYSGDHDLVVPFLATQAWIKSLNYSIIHEWRPWMIKDQIAGYTRTYSNKMTFATVKGSGHTAEYKPNETFIMFQRWISGHDL.

A signal peptide spans 1–21; the sequence is MKSTPKLLLLLLFIINHHVDS. 3 disulfides stabilise this stretch: cysteine 80–cysteine 323, cysteine 244–cysteine 258, and cysteine 282–cysteine 289. A glycan (N-linked (GlcNAc...) asparagine) is linked at asparagine 101. Residue serine 176 is part of the active site. Asparagine 313, asparagine 336, and asparagine 344 each carry an N-linked (GlcNAc...) asparagine glycan. The active site involves aspartate 360. A glycan (N-linked (GlcNAc...) asparagine) is linked at asparagine 376. Residue histidine 413 is part of the active site. N-linked (GlcNAc...) asparagine glycosylation occurs at asparagine 420.

This sequence belongs to the peptidase S10 family. As to expression, expressed in roots.

The protein resides in the secreted. Functionally, probable carboxypeptidase. This chain is Serine carboxypeptidase-like 12 (SCPL12), found in Arabidopsis thaliana (Mouse-ear cress).